The sequence spans 283 residues: Alkaline ceramidase (283 aa).

Ca(2+) is bound by residues aspartate 28, tryptophan 29, glutamate 31, asparagine 33, and glutamate 42. The next 2 membrane-spanning stretches (helical) occupy residues phenylalanine 43–phenylalanine 63 and phenylalanine 69–methionine 89. Histidine 92 is a binding site for Zn(2+). The next 4 membrane-spanning stretches (helical) occupy residues isoleucine 98 to phenylalanine 118, threonine 134 to tryptophan 151, proline 154 to threonine 174, and leucine 187 to cysteine 209. 2 residues coordinate Zn(2+): histidine 221 and histidine 225. A helical transmembrane segment spans residues glycine 222–phenylalanine 242.

Belongs to the alkaline ceramidase family. It depends on Zn(2+) as a cofactor. As to expression, expressed in the central midgut of late embryos. In brain, it is present at the interhemispheric junction and in groups of cells in the central brain.

The protein localises to the membrane. The catalysed reaction is an N-acylsphing-4-enine + H2O = sphing-4-enine + a fatty acid. Functionally, hydrolyzes the sphingolipid ceramide into sphingosine and free fatty acid. The protein is Alkaline ceramidase (bwa) of Drosophila melanogaster (Fruit fly).